The chain runs to 318 residues: NADH-ubiquinone oxidoreductase chain 1 (318 aa).

The next 9 helical transmembrane spans lie at 2 to 22 (FLMN…FLTL), 37 to 57 (PNIV…KLFI), 69 to 89 (LMFT…WIPM), 100 to 120 (LGVL…LWSG), 136 to 156 (VAQT…TMMM), 171 to 191 (HMWL…STLA), 206 to 226 (ELVS…FFMA), 253 to 273 (ELFT…FLWI), and 294 to 314 (LPLT…SAGI).

It belongs to the complex I subunit 1 family.

The protein localises to the mitochondrion inner membrane. It catalyses the reaction a ubiquinone + NADH + 5 H(+)(in) = a ubiquinol + NAD(+) + 4 H(+)(out). Its function is as follows. Core subunit of the mitochondrial membrane respiratory chain NADH dehydrogenase (Complex I) that is believed to belong to the minimal assembly required for catalysis. Complex I functions in the transfer of electrons from NADH to the respiratory chain. The immediate electron acceptor for the enzyme is believed to be ubiquinone. This is NADH-ubiquinone oxidoreductase chain 1 (MT-ND1) from Tolypeutes matacus (Southern three-banded armadillo).